We begin with the raw amino-acid sequence, 390 residues long: MLPLSIKDDEYKPPKFNLVRKVSGWIRSIFSDTTSRNLFCFLCLNLSFAFVELFYGIWSNSLGLISDSFHMFFDCTALLAGLAASVISRWKTNEAFSYGYVRAEVLAGFVNGLFLIFTAFFIFSEGIERALDTPEVHHERLLPVSILGFLVNLIGIFVFQHGGGHGHSHESGHGHSHSLFNGSLSHGHSHSHGGSHGHSHGGGHGHSHSHGEGHGHSHDQSHKHGHGYGSSCHDEPPEEHTGSSKQILEGVFLHIVADALGSVGVIISTILMQRYGLMIADPICSMLIALLIFVSVIPLLKQSIGILMQRTPPSLDHVLPQCYQRVQQLQGVYHLQEPHFWTLCTDVYIGTLKLVIGPEADARWILSQTHNIFTQAGVRQLYVQIDMAAM.

Residues 1–37 lie on the Cytoplasmic side of the membrane; sequence MLPLSIKDDEYKPPKFNLVRKVSGWIRSIFSDTTSRN. A helical transmembrane segment spans residues 38–58; that stretch reads LFCFLCLNLSFAFVELFYGIW. Residues 59 to 67 lie on the Lumenal side of the membrane; it reads SNSLGLISD. Residues 68 to 88 traverse the membrane as a helical segment; it reads SFHMFFDCTALLAGLAASVIS. Topologically, residues 89-102 are cytoplasmic; it reads RWKTNEAFSYGYVR. The chain crosses the membrane as a helical span at residues 103–123; sequence AEVLAGFVNGLFLIFTAFFIF. Residues 124–140 lie on the Lumenal side of the membrane; sequence SEGIERALDTPEVHHER. Residues 141–161 traverse the membrane as a helical segment; sequence LLPVSILGFLVNLIGIFVFQH. The his-rich loop stretch occupies residues 161 to 226; that stretch reads HGGGHGHSHE…SHDQSHKHGH (66 aa). Topologically, residues 162 to 250 are cytoplasmic; it reads GGGHGHSHES…TGSSKQILEG (89 aa). Residues 167–243 form a disordered region; it reads HSHESGHGHS…DEPPEEHTGS (77 aa). The segment covering 177–186 has biased composition (low complexity); the sequence is HSLFNGSLSH. Residues 187-208 are compositionally biased toward basic residues; it reads GHSHSHGGSHGHSHGGGHGHSH. 2 stretches are compositionally biased toward basic and acidic residues: residues 209–222 and 232–242; these read SHGE…DQSH and CHDEPPEEHTG. A helical membrane pass occupies residues 251–271; the sequence is VFLHIVADALGSVGVIISTIL. Over 272–276 the chain is Lumenal; that stretch reads MQRYG. A helical membrane pass occupies residues 277-297; that stretch reads LMIADPICSMLIALLIFVSVI. Residues 298–390 lie on the Cytoplasmic side of the membrane; the sequence is PLLKQSIGIL…LYVQIDMAAM (93 aa).

The protein belongs to the cation diffusion facilitator (CDF) transporter (TC 2.A.4) family. SLC30A subfamily. Homooligomer.

Its subcellular location is the golgi apparatus membrane. It localises to the cytoplasmic vesicle. The protein resides in the golgi apparatus. The protein localises to the trans-Golgi network. It is found in the sarcoplasmic reticulum. Its subcellular location is the mitochondrion. The catalysed reaction is Zn(2+)(in) = Zn(2+)(out). Its function is as follows. Zinc ion transporter mediating zinc entry from the cytosol into the lumen of organelles along the secretory pathway. By contributing to zinc ion homeostasis within the early secretory pathway, regulates the activation and folding of enzymes like alkaline phosphatases. The protein is Zinc transporter 7 (slc30a7) of Xenopus tropicalis (Western clawed frog).